Reading from the N-terminus, the 208-residue chain is Imidazoleglycerol-phosphate dehydratase (208 aa).

The protein belongs to the imidazoleglycerol-phosphate dehydratase family.

The protein resides in the cytoplasm. The enzyme catalyses D-erythro-1-(imidazol-4-yl)glycerol 3-phosphate = 3-(imidazol-4-yl)-2-oxopropyl phosphate + H2O. Its pathway is amino-acid biosynthesis; L-histidine biosynthesis; L-histidine from 5-phospho-alpha-D-ribose 1-diphosphate: step 6/9. The chain is Imidazoleglycerol-phosphate dehydratase from Symbiobacterium thermophilum (strain DSM 24528 / JCM 14929 / IAM 14863 / T).